The primary structure comprises 620 residues: Aspartic protease 1 (620 aa).

Over 1–110 (MSPSSRFRNL…LGKAVGLSTS (110 aa)) the chain is Cytoplasmic. Residues 1 to 258 (MSPSSRFRNL…SKKDDGNLSG (258 aa)) constitute a propeptide that is removed on maturation. The important for proper cellular trafficking stretch occupies residues 27-31 (YASLL). A helical; Signal-anchor for type II membrane protein membrane pass occupies residues 111–131 (VICVVALFGIVCLCLYGLVNF). At 132 to 620 (SFTSVETSPL…KQIGFARLKN (489 aa)) the chain is on the lumenal side. Residues 138-174 (TSPLDDPRNSPVMGELGNPQASTPSSARADTPARHDR) form a disordered region. The span at 156-165 (PQASTPSSAR) shows a compositional bias: polar residues. The Peptidase A1 domain maps to 275 to 616 (YYTEIYVGSP…DYDNKQIGFA (342 aa)). Residues D293 and D476 contribute to the active site. C513 and C550 are disulfide-bonded.

This sequence belongs to the peptidase A1 family. Proteolytically cleaved into the soluble active mature form by, at least, cysteine protease CPL. Undergoes at least four processing steps; the first cleavage removes the propeptide resulting in the production of a soluble 45 kDa protein, which is further processed into a 35 kDa form followed by an additional processing into the final active 30 kDa form.

The protein localises to the membrane. It localises to the vacuole. Functionally, aspartyl protease which is dispensable for protein degradation in the vacuolar compartment (VAC) or for tachyzoite and bradyzoite viability. This chain is Aspartic protease 1, found in Toxoplasma gondii.